The following is a 78-amino-acid chain: NAD(P)H-quinone oxidoreductase subunit O (78 aa).

It belongs to the complex I NdhO subunit family. In terms of assembly, NDH-1 can be composed of about 15 different subunits; different subcomplexes with different compositions have been identified which probably have different functions.

It localises to the cellular thylakoid membrane. It catalyses the reaction a plastoquinone + NADH + (n+1) H(+)(in) = a plastoquinol + NAD(+) + n H(+)(out). The enzyme catalyses a plastoquinone + NADPH + (n+1) H(+)(in) = a plastoquinol + NADP(+) + n H(+)(out). Functionally, NDH-1 shuttles electrons from an unknown electron donor, via FMN and iron-sulfur (Fe-S) centers, to quinones in the respiratory and/or the photosynthetic chain. The immediate electron acceptor for the enzyme in this species is believed to be plastoquinone. Couples the redox reaction to proton translocation, and thus conserves the redox energy in a proton gradient. Cyanobacterial NDH-1 also plays a role in inorganic carbon-concentration. This is NAD(P)H-quinone oxidoreductase subunit O from Prochlorococcus marinus (strain MIT 9301).